The chain runs to 308 residues: Putative T-box protein 30/42 (308 aa).

Residues 11 to 192 constitute a DNA-binding region (T-box); the sequence is MSNEELWKER…KHSTFGNRSE (182 aa). The tract at residues 186–220 is disordered; the sequence is TFGNRSEGGIKRKTSDAAGQLPSKRSSKKPVKKDV.

The protein resides in the nucleus. Functionally, involved in the regulatory network to control embryonic patterning and morphogenesis. Implicated in negatively regulating vab-7 expression at the anterior of embryos. This chain is Putative T-box protein 30/42 (tbx-30), found in Caenorhabditis elegans.